A 924-amino-acid polypeptide reads, in one-letter code: Periplasmic nitrate reductase (924 aa).

Residues 1 to 29 (MNRRDFIKNTAIASACGVAGLSVPSSVLA) constitute a signal peptide (tat-type signal). A 4Fe-4S Mo/W bis-MGD-type domain is found at 35–91 (WRWDKAVCRFCGTGCGILVARQDGKIVAVKGDPAAPVNRGLNCIKGYFNAKIMYGED). Cysteine 42, cysteine 45, cysteine 49, and cysteine 77 together coordinate [4Fe-4S] cluster. Residues lysine 79, glutamine 147, asparagine 172, cysteine 176, 209-216 (WGANMAEM), methionine 417, glutamine 421, asparagine 527, 552-553 (SD), lysine 575, aspartate 602, and 814-823 (TGRVLEHWHS) each bind Mo-bis(molybdopterin guanine dinucleotide). Residue tryptophan 890 participates in substrate binding. Asparagine 898 and lysine 915 together coordinate Mo-bis(molybdopterin guanine dinucleotide).

The protein belongs to the prokaryotic molybdopterin-containing oxidoreductase family. NasA/NapA/NarB subfamily. In terms of assembly, component of the periplasmic nitrate reductase NapAB complex composed of NapA and NapB. The cofactor is [4Fe-4S] cluster. Mo-bis(molybdopterin guanine dinucleotide) serves as cofactor. In terms of processing, predicted to be exported by the Tat system. The position of the signal peptide cleavage has not been experimentally proven.

It localises to the periplasm. The catalysed reaction is 2 Fe(II)-[cytochrome] + nitrate + 2 H(+) = 2 Fe(III)-[cytochrome] + nitrite + H2O. Its function is as follows. Catalytic subunit of the periplasmic nitrate reductase complex NapAB. Receives electrons from NapB and catalyzes the reduction of nitrate to nitrite. The chain is Periplasmic nitrate reductase from Campylobacter lari (strain RM2100 / D67 / ATCC BAA-1060).